A 301-amino-acid chain; its full sequence is tRNA pseudouridine synthase B (301 aa).

Asp48 functions as the Nucleophile in the catalytic mechanism.

This sequence belongs to the pseudouridine synthase TruB family. Type 1 subfamily.

The enzyme catalyses uridine(55) in tRNA = pseudouridine(55) in tRNA. Its function is as follows. Responsible for synthesis of pseudouridine from uracil-55 in the psi GC loop of transfer RNAs. The protein is tRNA pseudouridine synthase B of Mycobacterium ulcerans (strain Agy99).